The sequence spans 260 residues: Type III pantothenate kinase (260 aa).

Residue Asp6 to Val13 participates in ATP binding. Residue Gly107–Arg110 participates in substrate binding. The active-site Proton acceptor is Asp109. Asp129 lines the K(+) pocket. Thr132 is a binding site for ATP. Thr184 contacts substrate.

Belongs to the type III pantothenate kinase family. As to quaternary structure, homodimer. NH4(+) is required as a cofactor. It depends on K(+) as a cofactor.

The protein localises to the cytoplasm. It carries out the reaction (R)-pantothenate + ATP = (R)-4'-phosphopantothenate + ADP + H(+). It participates in cofactor biosynthesis; coenzyme A biosynthesis; CoA from (R)-pantothenate: step 1/5. Catalyzes the phosphorylation of pantothenate (Pan), the first step in CoA biosynthesis. The polypeptide is Type III pantothenate kinase (Ruegeria sp. (strain TM1040) (Silicibacter sp.)).